The sequence spans 480 residues: Glutamyl-tRNA(Gln) amidotransferase subunit A (480 aa).

Residues Lys70 and Ser145 each act as charge relay system in the active site. Ser169 (acyl-ester intermediate) is an active-site residue.

The protein belongs to the amidase family. GatA subfamily. Heterotrimer of A, B and C subunits.

It carries out the reaction L-glutamyl-tRNA(Gln) + L-glutamine + ATP + H2O = L-glutaminyl-tRNA(Gln) + L-glutamate + ADP + phosphate + H(+). Its function is as follows. Allows the formation of correctly charged Gln-tRNA(Gln) through the transamidation of misacylated Glu-tRNA(Gln) in organisms which lack glutaminyl-tRNA synthetase. The reaction takes place in the presence of glutamine and ATP through an activated gamma-phospho-Glu-tRNA(Gln). This Lactobacillus delbrueckii subsp. bulgaricus (strain ATCC BAA-365 / Lb-18) protein is Glutamyl-tRNA(Gln) amidotransferase subunit A.